The chain runs to 337 residues: Holliday junction branch migration complex subunit RuvB (337 aa).

Residues 1–20 (MQTRFVSPVNHDEEQDEPSV) form a disordered region. The interval 1–181 (MQTRFVSPVN…FGIILRLDLY (181 aa)) is large ATPase domain (RuvB-L). ATP is bound by residues arginine 21, glycine 62, lysine 65, threonine 66, threonine 67, 128-130 (EDY), arginine 171, tyrosine 181, and arginine 218. A Mg(2+)-binding site is contributed by threonine 66. The small ATPAse domain (RuvB-S) stretch occupies residues 182–252 (DPSELTVIVT…IANTALFALG (71 aa)). The head domain (RuvB-H) stretch occupies residues 255–337 (QKGLDILDRR…SHTRDLTSFL (83 aa)). DNA is bound by residues arginine 310 and arginine 315.

The protein belongs to the RuvB family. Homohexamer. Forms an RuvA(8)-RuvB(12)-Holliday junction (HJ) complex. HJ DNA is sandwiched between 2 RuvA tetramers; dsDNA enters through RuvA and exits via RuvB. An RuvB hexamer assembles on each DNA strand where it exits the tetramer. Each RuvB hexamer is contacted by two RuvA subunits (via domain III) on 2 adjacent RuvB subunits; this complex drives branch migration. In the full resolvosome a probable DNA-RuvA(4)-RuvB(12)-RuvC(2) complex forms which resolves the HJ.

The protein localises to the cytoplasm. The catalysed reaction is ATP + H2O = ADP + phosphate + H(+). Its function is as follows. The RuvA-RuvB-RuvC complex processes Holliday junction (HJ) DNA during genetic recombination and DNA repair, while the RuvA-RuvB complex plays an important role in the rescue of blocked DNA replication forks via replication fork reversal (RFR). RuvA specifically binds to HJ cruciform DNA, conferring on it an open structure. The RuvB hexamer acts as an ATP-dependent pump, pulling dsDNA into and through the RuvAB complex. RuvB forms 2 homohexamers on either side of HJ DNA bound by 1 or 2 RuvA tetramers; 4 subunits per hexamer contact DNA at a time. Coordinated motions by a converter formed by DNA-disengaged RuvB subunits stimulates ATP hydrolysis and nucleotide exchange. Immobilization of the converter enables RuvB to convert the ATP-contained energy into a lever motion, pulling 2 nucleotides of DNA out of the RuvA tetramer per ATP hydrolyzed, thus driving DNA branch migration. The RuvB motors rotate together with the DNA substrate, which together with the progressing nucleotide cycle form the mechanistic basis for DNA recombination by continuous HJ branch migration. Branch migration allows RuvC to scan DNA until it finds its consensus sequence, where it cleaves and resolves cruciform DNA. This chain is Holliday junction branch migration complex subunit RuvB, found in Methanospirillum hungatei JF-1 (strain ATCC 27890 / DSM 864 / NBRC 100397 / JF-1).